The primary structure comprises 64 residues: Translation machinery-associated protein 7 homolog (64 aa).

The segment at 1-64 (MSGRQGGKAK…GGGIKKSGKK (64 aa)) is disordered. The stretch at 21–50 (DLSEEDVEFKKKQQEEAKKIKEMAAKAGQR) forms a coiled coil. Basic and acidic residues predominate over residues 28-44 (EFKKKQQEEAKKIKEMA). Over residues 53–64 (LLGGGIKKSGKK) the composition is skewed to gly residues.

This sequence belongs to the TMA7 family.

This is Translation machinery-associated protein 7 homolog from Caenorhabditis briggsae.